A 911-amino-acid polypeptide reads, in one-letter code: DNA polymerase I (911 aa).

In terms of domain architecture, 5'-3' exonuclease spans 186–280 (VTPAQYPDLA…DTLRLQPWDR (95 aa)). The 3'-5' exonuclease domain occupies 320–497 (RGGLLESGTV…LAAALDAELD (178 aa)).

The protein belongs to the DNA polymerase type-A family. In terms of assembly, single-chain monomer with multiple functions.

It catalyses the reaction DNA(n) + a 2'-deoxyribonucleoside 5'-triphosphate = DNA(n+1) + diphosphate. In terms of biological role, in addition to polymerase activity, this DNA polymerase exhibits 3'-5' and 5'-3' exonuclease activity. This chain is DNA polymerase I (polA), found in Mycobacterium leprae (strain TN).